The chain runs to 144 residues: Arginine decarboxylase proenzyme (144 aa).

Residue S80 is the Schiff-base intermediate with substrate; via pyruvic acid of the active site. Position 80 is a pyruvic acid (Ser); by autocatalysis (S80). Residue H85 is the Proton acceptor; for processing activity of the active site. Catalysis depends on C100, which acts as the Proton donor; for catalytic activity.

It belongs to the prokaryotic AdoMetDC family. Type 1 subfamily. In terms of assembly, heterooctamer of four alpha and four beta chains arranged as a tetramer of alpha/beta heterodimers. Pyruvate serves as cofactor. Post-translationally, is synthesized initially as an inactive proenzyme. Formation of the active enzyme involves a self-maturation process in which the active site pyruvoyl group is generated from an internal serine residue via an autocatalytic post-translational modification. Two non-identical subunits are generated from the proenzyme in this reaction, and the pyruvate is formed at the N-terminus of the alpha chain, which is derived from the carboxyl end of the proenzyme. The post-translation cleavage follows an unusual pathway, termed non-hydrolytic serinolysis, in which the side chain hydroxyl group of the serine supplies its oxygen atom to form the C-terminus of the beta chain, while the remainder of the serine residue undergoes an oxidative deamination to produce ammonia and the pyruvoyl group blocking the N-terminus of the alpha chain.

It catalyses the reaction L-arginine + H(+) = agmatine + CO2. The protein operates within amine and polyamine biosynthesis; agmatine biosynthesis; agmatine from L-arginine: step 1/1. Specifically catalyzes the decarboxylation of L-arginine to agmatine. Has no S-adenosylmethionine decarboxylase (AdoMetDC) activity. This Ignicoccus hospitalis (strain KIN4/I / DSM 18386 / JCM 14125) protein is Arginine decarboxylase proenzyme.